Reading from the N-terminus, the 498-residue chain is Lysine--tRNA ligase (498 aa).

Mg(2+) contacts are provided by Glu-401 and Glu-408.

The protein belongs to the class-II aminoacyl-tRNA synthetase family. In terms of assembly, homodimer. Mg(2+) is required as a cofactor.

The protein resides in the cytoplasm. It catalyses the reaction tRNA(Lys) + L-lysine + ATP = L-lysyl-tRNA(Lys) + AMP + diphosphate. This is Lysine--tRNA ligase from Dehalococcoides mccartyi (strain ATCC BAA-2100 / JCM 16839 / KCTC 5957 / BAV1).